The following is a 482-amino-acid chain: Zinc finger protein 223 (482 aa).

Positions 8-78 constitute a KRAB domain; that stretch reads VTFKDVAVVF…DIATQREGNS (71 aa). 5 C2H2-type zinc fingers span residues 176 to 198, 204 to 226, 232 to 254, 260 to 282, and 288 to 310; these read HSCDECGKSFCYISALHIHQRVH, FKCDVCGKEFSQSLHLQTHQRVH, FKCEQCGRGFRCRSALTVHCKLH, YNCEACGRAFIHDFQLQKHQRIH, and FKCEICSVSFRLRSSLNRHCVVH. Residues 316 to 338 form a C2H2-type 6; degenerate zinc finger; the sequence is NSTGEYGKGFIRRLDLCKHQTIH. 3 C2H2-type zinc fingers span residues 344-366, 372-394, and 400-422; these read YNCKECGKSFRRSSYLLIHQRVH, YKCDKCGKSYITKSGLDLHHRAH, and YNCDDCGKSFRQASSILNHKRLH. The segment at 428–450 adopts a C2H2-type 10; degenerate zinc-finger fold; the sequence is FKCEDCGKKLVYRSYRKDQQKNH.

It belongs to the krueppel C2H2-type zinc-finger protein family.

The protein localises to the nucleus. May be involved in transcriptional regulation. This chain is Zinc finger protein 223 (ZNF223), found in Homo sapiens (Human).